The sequence spans 360 residues: Pyrimidine monooxygenase RutA (360 aa).

FMN is bound by residues 49–50, asparagine 115, glutamate 124, 140–141, and serine 190; these read IK and RY.

This sequence belongs to the NtaA/SnaA/DszA monooxygenase family. RutA subfamily.

It catalyses the reaction uracil + FMNH2 + NADH + O2 = (Z)-3-ureidoacrylate + FMN + NAD(+) + H2O + H(+). The catalysed reaction is thymine + FMNH2 + NADH + O2 = (Z)-2-methylureidoacrylate + FMN + NAD(+) + H2O + H(+). In terms of biological role, catalyzes the pyrimidine ring opening between N-3 and C-4 by an unusual flavin hydroperoxide-catalyzed mechanism, adding oxygen atoms in the process to yield ureidoacrylate peracid, that immediately reacts with FMN forming ureidoacrylate and FMN-N(5)-oxide. The FMN-N(5)-oxide reacts spontaneously with NADH to produce FMN. Requires the flavin reductase RutF to regenerate FMN in vivo. This Stutzerimonas stutzeri (strain A1501) (Pseudomonas stutzeri) protein is Pyrimidine monooxygenase RutA.